A 104-amino-acid polypeptide reads, in one-letter code: ATP-dependent Clp protease adapter protein ClpS (104 aa).

Belongs to the ClpS family. As to quaternary structure, binds to the N-terminal domain of the chaperone ClpA.

In terms of biological role, involved in the modulation of the specificity of the ClpAP-mediated ATP-dependent protein degradation. The polypeptide is ATP-dependent Clp protease adapter protein ClpS (Paraburkholderia phymatum (strain DSM 17167 / CIP 108236 / LMG 21445 / STM815) (Burkholderia phymatum)).